Here is a 199-residue protein sequence, read N- to C-terminus: dITP/XTP pyrophosphatase (199 aa).

A substrate-binding site is contributed by 7-12 (TTNLHK). 2 residues coordinate Mg(2+): E41 and D70. The Proton acceptor role is filled by D70. Substrate-binding positions include S71, 154–157 (FGYD), K177, and 182–183 (HR).

Belongs to the HAM1 NTPase family. Homodimer. Requires Mg(2+) as cofactor.

The enzyme catalyses XTP + H2O = XMP + diphosphate + H(+). It carries out the reaction dITP + H2O = dIMP + diphosphate + H(+). The catalysed reaction is ITP + H2O = IMP + diphosphate + H(+). In terms of biological role, pyrophosphatase that catalyzes the hydrolysis of nucleoside triphosphates to their monophosphate derivatives, with a high preference for the non-canonical purine nucleotides XTP (xanthosine triphosphate), dITP (deoxyinosine triphosphate) and ITP. Seems to function as a house-cleaning enzyme that removes non-canonical purine nucleotides from the nucleotide pool, thus preventing their incorporation into DNA/RNA and avoiding chromosomal lesions. In Protochlamydia amoebophila (strain UWE25), this protein is dITP/XTP pyrophosphatase.